Here is a 235-residue protein sequence, read N- to C-terminus: tRNA (guanine-N(1)-)-methyltransferase (235 aa).

S-adenosyl-L-methionine-binding positions include G112 and 132–137 (LGDFVL).

It belongs to the RNA methyltransferase TrmD family. As to quaternary structure, homodimer.

It is found in the cytoplasm. It carries out the reaction guanosine(37) in tRNA + S-adenosyl-L-methionine = N(1)-methylguanosine(37) in tRNA + S-adenosyl-L-homocysteine + H(+). In terms of biological role, specifically methylates guanosine-37 in various tRNAs. This is tRNA (guanine-N(1)-)-methyltransferase from Acaryochloris marina (strain MBIC 11017).